Reading from the N-terminus, the 710-residue chain is uncharacterized protein (710 aa).

Coiled coils occupy residues 273-298 (LYRQ…MEEG) and 477-528 (RYEK…VADT).

This is an uncharacterized protein from Coxiella burnetii (strain RSA 493 / Nine Mile phase I).